The following is a 233-amino-acid chain: Purine nucleoside phosphorylase DeoD-type (233 aa).

Histidine 4 is a binding site for a purine D-ribonucleoside. Phosphate is bound by residues glycine 20, arginine 24, arginine 43, and 87-90 (RIGT). A purine D-ribonucleoside contacts are provided by residues 179 to 181 (EME) and 203 to 204 (SD). The active-site Proton donor is aspartate 204.

It belongs to the PNP/UDP phosphorylase family. Homohexamer; trimer of homodimers.

The catalysed reaction is a purine D-ribonucleoside + phosphate = a purine nucleobase + alpha-D-ribose 1-phosphate. The enzyme catalyses a purine 2'-deoxy-D-ribonucleoside + phosphate = a purine nucleobase + 2-deoxy-alpha-D-ribose 1-phosphate. Catalyzes the reversible phosphorolytic breakdown of the N-glycosidic bond in the beta-(deoxy)ribonucleoside molecules, with the formation of the corresponding free purine bases and pentose-1-phosphate. The polypeptide is Purine nucleoside phosphorylase DeoD-type (Thermoanaerobacter pseudethanolicus (strain ATCC 33223 / 39E) (Clostridium thermohydrosulfuricum)).